A 184-amino-acid polypeptide reads, in one-letter code: Major fimbrial subunit (184 aa).

The N-terminal stretch at 1 to 22 is a signal peptide; sequence MKLSKIALAAALVFGINSVATA. Cysteines 49 and 88 form a disulfide.

This sequence belongs to the fimbrial protein family.

The protein localises to the fimbrium. Functionally, major structural component of PMF fimbriae. This Proteus mirabilis (strain HI4320) protein is Major fimbrial subunit (pmfA).